A 585-amino-acid chain; its full sequence is A-type ATP synthase subunit A (585 aa).

231–238 contacts ATP; it reads GPFGSGKT.

It belongs to the ATPase alpha/beta chains family. Has multiple subunits with at least A(3), B(3), C, D, E, F, H, I and proteolipid K(x).

It is found in the cell membrane. It carries out the reaction ATP + H2O + 4 H(+)(in) = ADP + phosphate + 5 H(+)(out). Functionally, component of the A-type ATP synthase that produces ATP from ADP in the presence of a proton gradient across the membrane. The A chain is the catalytic subunit. The sequence is that of A-type ATP synthase subunit A from Thermococcus gammatolerans (strain DSM 15229 / JCM 11827 / EJ3).